Reading from the N-terminus, the 78-residue chain is Cytochrome c oxidase subunit 8, mitochondrial (78 aa).

Residues 1–27 constitute a mitochondrion transit peptide; the sequence is MLCQQMIRTTAKRSSNIMTRPIIMKRS. Topologically, residues 28–51 are mitochondrial matrix; that stretch reads VHFKDGVYENIPFKVKGRKTPYAL. A helical transmembrane segment spans residues 52–73; that stretch reads SHFGFFAIGFAVPFVACYVQLK. A topological domain (mitochondrial intermembrane) is located at residue K74. The propeptide occupies 75 to 78; that stretch reads SGAF.

Belongs to the cytochrome c oxidase VIIc family. In terms of assembly, component of the cytochrome c oxidase (complex IV, CIV), a multisubunit enzyme composed of 12 subunits. The complex is composed of a catalytic core of 3 subunits COX1, COX2 and COX3, encoded in the mitochondrial DNA, and 9 supernumerary subunits COX4, COX5A (or COX5B), COX6, COX7, COX8, COX9, COX12, COX13 and COX26, which are encoded in the nuclear genome. The complex exists as a monomer or a dimer and forms supercomplexes (SCs) in the inner mitochondrial membrane with a dimer of ubiquinol-cytochrome c oxidoreductase (cytochrome b-c1 complex, complex III, CIII), resulting in 2 different assemblies (supercomplexes III(2)IV and III(2)IV(2)).

It is found in the mitochondrion inner membrane. Its pathway is energy metabolism; oxidative phosphorylation. In terms of biological role, component of the cytochrome c oxidase, the last enzyme in the mitochondrial electron transport chain which drives oxidative phosphorylation. The respiratory chain contains 3 multisubunit complexes succinate dehydrogenase (complex II, CII), ubiquinol-cytochrome c oxidoreductase (cytochrome b-c1 complex, complex III, CIII) and cytochrome c oxidase (complex IV, CIV), that cooperate to transfer electrons derived from NADH and succinate to molecular oxygen, creating an electrochemical gradient over the inner membrane that drives transmembrane transport and the ATP synthase. Cytochrome c oxidase is the component of the respiratory chain that catalyzes the reduction of oxygen to water. Electrons originating from reduced cytochrome c in the intermembrane space (IMS) are transferred via the dinuclear copper A center (CU(A)) of COX2 and heme A of COX1 to the active site in COX1, a binuclear center (BNC) formed by heme A3 and copper B (CU(B)). The BNC reduces molecular oxygen to 2 water molecules using 4 electrons from cytochrome c in the IMS and 4 protons from the mitochondrial matrix. In Saccharomyces cerevisiae (strain ATCC 204508 / S288c) (Baker's yeast), this protein is Cytochrome c oxidase subunit 8, mitochondrial (COX8).